The primary structure comprises 610 residues: MIASQFLSALTLVLLIKESGAWSYNTSTEAMTYDEASAYCQQRYTHLVAIQNKEEIEYLNSILSYSPSYYWIGIRKVNNVWVWVGTQKPLTEEAKNWAPGEPNNRQKDEDCVEIYIKREKDVGMWNDERCSKKKLALCYTAACTNTSCSGHGECVETINNYTCKCDPGFSGLKCEQIVNCTALESPEHGSLVCSHPLGNFSYNSSCSISCDRGYLPSSMETMQCMSSGEWSAPIPACNVVECDAVTNPANGFVECFQNPGSFPWNTTCTFDCEEGFELMGAQSLQCTSSGNWDNEKPTCKAVTCRAVRQPQNGSVRCSHSPAGEFTFKSSCNFTCEEGFMLQGPAQVECTTQGQWTQQIPVCEAFQCTALSNPERGYMNCLPSASGSFRYGSSCEFSCEQGFVLKGSKRLQCGPTGEWDNEKPTCEAVRCDAVHQPPKGLVRCAHSPIGEFTYKSSCAFSCEEGFELHGSTQLECTSQGQWTEEVPSCQVVKCSSLAVPGKINMSCSGEPVFGTVCKFACPEGWTLNGSAARTCGATGHWSGLLPTCEAPTESNIPLVAGLSAAGLSLLTLAPFLLWLRKCLRKAKKFVPASSCQSLESDGSYQKPSYIL.

Residues 1 to 21 (MIASQFLSALTLVLLIKESGA) form the signal peptide. The C-type lectin domain maps to 22-139 (WSYNTSTEAM…CSKKKLALCY (118 aa)). The Extracellular segment spans residues 22–556 (WSYNTSTEAM…CEAPTESNIP (535 aa)). N-linked (GlcNAc...) asparagine glycosylation occurs at N25. Intrachain disulfides connect C40-C138, C111-C130, C143-C154, C148-C163, and C165-C174. E101, N103, and E109 together coordinate Ca(2+). Residues 101-109 (EPNNRQKDE), 113-118 (EIYIKR), and 126-128 (NDE) contribute to the a carbohydrate site. Positions 126 and 127 each coordinate Ca(2+). In terms of domain architecture, EGF-like spans 140-175 (TAACTNTSCSGHGECVETINNYTCKCDPGFSGLKCE). N-linked (GlcNAc...) asparagine glycosylation is found at N145 and N160. Sushi domains lie at 178-239 (VNCT…ACNV), 240-301 (VECD…TCKA), 303-364 (TCRA…VCEA), 366-427 (QCTA…TCEA), 429-490 (RCDA…SCQV), and 491-549 (VKCS…TCEA). N-linked (GlcNAc...) asparagine glycosylation is found at N179, N199, and N203. 14 disulfide bridges follow: C180–C224, C193–C206, C210–C237, C242–C286, C255–C268, C272–C299, C304–C349, C335–C362, C367–C412, C398–C425, C430–C475, C461–C488, C493–C534, and C520–C547. The N-linked (GlcNAc...) asparagine glycan is linked to N265. N-linked (GlcNAc...) asparagine glycans are attached at residues N312 and N332. N-linked (GlcNAc...) asparagine glycans are attached at residues N503 and N527. The chain crosses the membrane as a helical span at residues 557–578 (LVAGLSAAGLSLLTLAPFLLWL). Over 579–610 (RKCLRKAKKFVPASSCQSLESDGSYQKPSYIL) the chain is Cytoplasmic.

It belongs to the selectin/LECAM family. In terms of assembly, interacts with SELPLG/PSGL1 and PODXL2 through the sialyl Lewis X epitope. SELPLG sulfation appears not to be required for this interaction.

It is found in the cell membrane. Functionally, cell-surface glycoprotein having a role in immunoadhesion. Mediates in the adhesion of blood neutrophils in cytokine-activated endothelium through interaction with SELPLG/PSGL1. May have a role in capillary morphogenesis. This Homo sapiens (Human) protein is E-selectin (SELE).